A 118-amino-acid polypeptide reads, in one-letter code: DNA mimic protein DMP12 (118 aa).

This sequence belongs to the DMP12-like protein family. Monomer. Interacts with the dimeric form of the DNA-binding protein HU.

Acts as a DNA mimic. Interacts with the DNA-binding protein HU and partially prevents the binding of HU protein to DNA by occupying the DNA binding sites on the protein. However, the relatively weak affinity of DMP12 for HU suggests that it may not completely block the HU protein-DNA binding, and that DMP12 is more likely to act as a regulator than a competitive inhibitor. It protects HU protein from limited digestion by trypsin in a limited trypsin digestion assay, suggesting that it may serve to protect the HU protein and improve the stability of unbound HU protein. This chain is DNA mimic protein DMP12, found in Neisseria meningitidis serogroup B (strain ATCC BAA-335 / MC58).